The primary structure comprises 223 residues: Killer cell lectin-like receptor subfamily B member 1B allele C (223 aa).

At 1-45 (MDTAVVYADLHLARTGEPKRESPPSLSPDTCQCPRWHRLALKLGC) the chain is on the cytoplasmic side. The ITIM motif motif lies at 5-10 (VVYADL). Residues 31-34 (CQCP) carry the LCK-binding motif motif. Residues 46–66 (ACFILLVLSVIGLGVLVLTLL) traverse the membrane as a helical; Signal-anchor for type II membrane protein segment. Over 67–223 (QKPLLQNSPA…LKRESTCNDS (157 aa)) the chain is Extracellular. The region spanning 101-211 (HRDKCFHVSQ…CDSDNIWICQ (111 aa)) is the C-type lectin domain. 2 disulfides stabilise this stretch: Cys-122-Cys-210 and Cys-189-Cys-202.

Homodimer; disulfide-linked. Interacts with tyrosine kinase LCK. Binds PTPN6/SHP-1 in a phosphorylation-dependent manner. As to expression, expressed in a subset of natural killer cells.

It is found in the membrane. Functionally, receptor for CLEC2D/OCIL. Ligand-binding contributes to inhibition of cytotoxic natural killer (NK) cells. May mediate MHC class I-independent 'missing-self' recognition of allografts, tumor cells and virus-infected cells. In Rattus norvegicus (Rat), this protein is Killer cell lectin-like receptor subfamily B member 1B allele C.